Reading from the N-terminus, the 290-residue chain is Short chain dehydrogenase andI (290 aa).

7 residues coordinate NADP(+): I35, N120, R154, Y186, K190, V219, and T221. Y186 serves as the catalytic Proton acceptor. Residue K190 is the Lowers pKa of active site Tyr of the active site.

It belongs to the short-chain dehydrogenases/reductases (SDR) family.

It participates in secondary metabolite biosynthesis; terpenoid biosynthesis. In terms of biological role, short chain dehydrogenase; part of the gene cluster that mediates the biosynthesis of anditomin, a fungal meroterpenoid. The first step of the pathway is the synthesis of 3,5-dimethylorsellinic acid (DMOA) by the polyketide synthase andM. DMOA is then converted to the phthalide compound 5,7-dihydroxy-4,6-dimethylphthalide (DHDMP) by the cytochrome P450 monooxygenase andK, which is further prenylated by the prenyltransferase andD to yield farnesyl-DHDMP. Further epoxidation by the FAD-dependent monooxygenase andE leads to epoxyfarnesyl-DHDMP. The next step involves the terpene cyclase andB that converts epoxyfarnesyl-DHDMP into preandiloid A through opening of the epoxide ring followed by the cyclization of the farnesyl moiety. Preandiloid A is in turn oxidized at the C-3 hydroxyl group to yield preandiloid B by the dehydrogenase andC. The dioxygenase andA is solely responsible for the dehydrogenation of preandiloid B leading to the enone preandiloid C, as well as for the intriguing structural rearrangement to generate the bicyclo[2.2.2]octane core, transforming preandiloid C into andiconin. FAD-binding monooxygenase andJ then produces andilesin D which is reduced by dehydrogenase andI to yield andilesin A. Action of acetyltransferase andG followed by a spontaneous acetate elimination leads then to andilesin B, which is in turn substrate of the short chain dehydrogenase andH to yield andilesin C. Finally, the dioxygenase andF catalyzes the transformation of andilesin C to anditomin. The sequence is that of Short chain dehydrogenase andI from Emericella variicolor (Aspergillus stellatus).